The primary structure comprises 71 residues: ATP synthase F(0) complex subunit e, mitochondrial (71 aa).

An N6-acetyllysine modification is found at Lys34. At Ser68 the chain carries Phosphoserine.

The protein belongs to the ATPase e subunit family. Component of the ATP synthase complex composed at least of ATP5F1A/subunit alpha, ATP5F1B/subunit beta, ATP5MC1/subunit c (homooctomer), MT-ATP6/subunit a, MT-ATP8/subunit 8, ATP5ME/subunit e, ATP5MF/subunit f, ATP5MG/subunit g, ATP5MK/subunit k, ATP5MJ/subunit j, ATP5F1C/subunit gamma, ATP5F1D/subunit delta, ATP5F1E/subunit epsilon, ATP5PF/subunit F6, ATP5PB/subunit b, ATP5PD/subunit d, ATP5PO/subunit OSCP. ATP synthase complex consists of a soluble F(1) head domain (subunits alpha(3) and beta(3)) - the catalytic core - and a membrane F(0) domain - the membrane proton channel (subunits c, a, 8, e, f, g, k and j). These two domains are linked by a central stalk (subunits gamma, delta, and epsilon) rotating inside the F1 region and a stationary peripheral stalk (subunits F6, b, d, and OSCP).

The protein localises to the mitochondrion. It is found in the mitochondrion inner membrane. In terms of biological role, subunit e, of the mitochondrial membrane ATP synthase complex (F(1)F(0) ATP synthase or Complex V) that produces ATP from ADP in the presence of a proton gradient across the membrane which is generated by electron transport complexes of the respiratory chain. ATP synthase complex consist of a soluble F(1) head domain - the catalytic core - and a membrane F(1) domain - the membrane proton channel. These two domains are linked by a central stalk rotating inside the F(1) region and a stationary peripheral stalk. During catalysis, ATP synthesis in the catalytic domain of F(1) is coupled via a rotary mechanism of the central stalk subunits to proton translocation. In vivo, can only synthesize ATP although its ATP hydrolase activity can be activated artificially in vitro. Part of the complex F(0) domain. The sequence is that of ATP synthase F(0) complex subunit e, mitochondrial from Rattus norvegicus (Rat).